The sequence spans 156 residues: 3-hydroxyacyl-[acyl-carrier-protein] dehydratase FabZ (156 aa).

The active site involves histidine 62.

The protein belongs to the thioester dehydratase family. FabZ subfamily.

It is found in the cytoplasm. The catalysed reaction is a (3R)-hydroxyacyl-[ACP] = a (2E)-enoyl-[ACP] + H2O. Involved in unsaturated fatty acids biosynthesis. Catalyzes the dehydration of short chain beta-hydroxyacyl-ACPs and long chain saturated and unsaturated beta-hydroxyacyl-ACPs. This is 3-hydroxyacyl-[acyl-carrier-protein] dehydratase FabZ from Parasynechococcus marenigrum (strain WH8102).